A 218-amino-acid chain; its full sequence is UPF0502 protein CJA_1529 (218 aa).

It belongs to the UPF0502 family.

This chain is UPF0502 protein CJA_1529, found in Cellvibrio japonicus (strain Ueda107) (Pseudomonas fluorescens subsp. cellulosa).